The chain runs to 442 residues: Gamma-glutamyl phosphate reductase (442 aa).

The protein belongs to the gamma-glutamyl phosphate reductase family.

It is found in the cytoplasm. The catalysed reaction is L-glutamate 5-semialdehyde + phosphate + NADP(+) = L-glutamyl 5-phosphate + NADPH + H(+). Its pathway is amino-acid biosynthesis; L-proline biosynthesis; L-glutamate 5-semialdehyde from L-glutamate: step 2/2. Functionally, catalyzes the NADPH-dependent reduction of L-glutamate 5-phosphate into L-glutamate 5-semialdehyde and phosphate. The product spontaneously undergoes cyclization to form 1-pyrroline-5-carboxylate. This Campylobacter curvus (strain 525.92) protein is Gamma-glutamyl phosphate reductase.